A 240-amino-acid chain; its full sequence is Transmembrane emp24 domain-containing protein 6 (240 aa).

An N-terminal signal peptide occupies residues 1–21; the sequence is MFPLLFVAGLVVLNLVSSARS. At 22 to 200 the chain is on the lumenal side; sequence QKTEPLSGTG…FFLLQSNYNY (179 aa). Residues 53–138 form the GOLD domain; sequence TECFWQFAHQ…SVQVYLNFGV (86 aa). N107 and N156 each carry an N-linked (GlcNAc...) asparagine glycan. Residues 201 to 223 form a helical membrane-spanning segment; sequence VNWWSTAQSLVIVLSGILQLYFL. Topologically, residues 224–240 are cytoplasmic; the sequence is KRLFNTPMTTETQKPRC.

The protein belongs to the EMP24/GP25L family.

The protein localises to the endoplasmic reticulum membrane. The polypeptide is Transmembrane emp24 domain-containing protein 6 (TMED6) (Bos taurus (Bovine)).